Reading from the N-terminus, the 372-residue chain is tRNA-specific 2-thiouridylase MnmA (372 aa).

ATP-binding positions include 16-23 and M42; that span reads GMSGGVDS. Residues 102–104 form an interaction with target base in tRNA region; it reads NPD. C107 acts as the Nucleophile in catalysis. Residues C107 and C205 are joined by a disulfide bond. G132 serves as a coordination point for ATP. Positions 155–157 are interaction with tRNA; the sequence is KDQ. C205 acts as the Cysteine persulfide intermediate in catalysis. The segment at 317 to 318 is interaction with tRNA; it reads RY.

It belongs to the MnmA/TRMU family.

Its subcellular location is the cytoplasm. It carries out the reaction S-sulfanyl-L-cysteinyl-[protein] + uridine(34) in tRNA + AH2 + ATP = 2-thiouridine(34) in tRNA + L-cysteinyl-[protein] + A + AMP + diphosphate + H(+). Its function is as follows. Catalyzes the 2-thiolation of uridine at the wobble position (U34) of tRNA, leading to the formation of s(2)U34. This chain is tRNA-specific 2-thiouridylase MnmA, found in Shewanella sp. (strain W3-18-1).